The chain runs to 309 residues: Tyrosine recombinase XerD (309 aa).

In terms of domain architecture, Core-binding (CB) spans 3–88 (MRASLAIENF…ALRQFFRFLY (86 aa)). One can recognise a Tyr recombinase domain in the interval 109–302 (PLPKIMSVEN…LEERLHKLVS (194 aa)). Catalysis depends on residues Arg-158, Lys-182, His-254, Arg-257, and His-280. Tyr-289 functions as the O-(3'-phospho-DNA)-tyrosine intermediate in the catalytic mechanism.

The protein belongs to the 'phage' integrase family. XerD subfamily. In terms of assembly, forms a cyclic heterotetrameric complex composed of two molecules of XerC and two molecules of XerD.

The protein localises to the cytoplasm. Its function is as follows. Site-specific tyrosine recombinase, which acts by catalyzing the cutting and rejoining of the recombining DNA molecules. The XerC-XerD complex is essential to convert dimers of the bacterial chromosome into monomers to permit their segregation at cell division. It also contributes to the segregational stability of plasmids. The polypeptide is Tyrosine recombinase XerD (Brucella suis biovar 1 (strain 1330)).